Here is a 331-residue protein sequence, read N- to C-terminus: N-arachidonyl glycine receptor (331 aa).

The Extracellular segment spans residues 1–26; it reads MAIPSNRDQLALSNGSHPEEYKIAAL. A glycan (N-linked (GlcNAc...) asparagine) is linked at Asn-14. The helical transmembrane segment at 27 to 47 threads the bilayer; sequence VFYSCIFLIGLLVNVTALWVF. At 48-56 the chain is on the cytoplasmic side; the sequence is SCTTKKRTT. Residues 57–77 traverse the membrane as a helical segment; sequence VTIYMMNVALLDLVFILSLPF. The Extracellular segment spans residues 78 to 95; that stretch reads RMFYYAKGEWPFGDYFCH. Cys-94 and Cys-172 are disulfide-bonded. A helical transmembrane segment spans residues 96-116; the sequence is ILGALVVFYPSLALWLLALIS. Topologically, residues 117–138 are cytoplasmic; that stretch reads ADRYMAIVQPKYAKELKNTGKA. The chain crosses the membrane as a helical span at residues 139-159; the sequence is VLACVGVWIMTLTTTVPLLLL. The Extracellular portion of the chain corresponds to 160 to 191; that stretch reads DEDPDKASSPATCLKISDIIHLKAVNVLNFTR. The N-linked (GlcNAc...) asparagine glycan is linked to Asn-188. A helical transmembrane segment spans residues 192-212; it reads LIFFFLIPLFIMIGCYVVIIH. The Cytoplasmic segment spans residues 213–236; that stretch reads SLLRGQTSKLKPKVKEKSIRIIVT. A helical transmembrane segment spans residues 237-257; that stretch reads LLLQVLACFVPFHICFALLML. At 258–268 the chain is on the extracellular side; the sequence is QGEENSYSPWG. A helical transmembrane segment spans residues 269–289; that stretch reads AFTTFLMNLSTCLDVVLYYIV. The Cytoplasmic segment spans residues 290–331; that stretch reads SKQFQARVISVMLYRNYLRSVRRKSVRSGSLRSLSNMNSEML. The residue at position 322 (Ser-322) is a Phosphoserine.

The protein belongs to the G-protein coupled receptor 1 family. As to expression, expressed in testis, spleen and brain (at protein level).

The protein localises to the cell membrane. It localises to the cytoplasmic vesicle membrane. Its function is as follows. G protein-coupled receptor (GPCR) that plays a role in diverse physiological processes particularly within the immune and nervous systems. Becomes active when triggered by various endogenous ligands including endocannabinoid N-arachidonyl glycine (NAGly), delta-9-tetrahydrocannabinol or resolvin D2/RvD2 derived from the omega-3 fatty acid docosahexaenoic acid (DHA). Upon RvD2 binding, facilitates the resolution of inflammation, aiding in tissue repair and homeostasis. Mechanistically, RvD2 ligation initiates Galphas protein coupling, activation of cAMP-PKA signaling pathway and phosphorylation of STAT3, leading to RvD2-stimulated macrophage phagocytosis. Mediates NAGly-induced process of reorganization of actin filaments and induction of acrosomal exocytosis. Activation by N-arachidonoyl glycine (NAGly) can also induce apoptosis in macrophages. Plays a role in homeostasis of CD8+ subsets of intraepithelial lymphocytes (IELs) (CD8alphaalpha and CD8alphabeta IELs) in small intestine by supporting preferential migration of CD8alphaalpha T-cells to intraepithelial compartment over lamina propria compartment, and by mediating their reconstitution into small intestine after bone marrow transplant. Participates also in hypotensive responses, mediating reduction in intraocular and blood pressure. In Rattus norvegicus (Rat), this protein is N-arachidonyl glycine receptor.